A 177-amino-acid polypeptide reads, in one-letter code: Probable nicotinate-nucleotide adenylyltransferase (177 aa).

Belongs to the NadD family.

It catalyses the reaction nicotinate beta-D-ribonucleotide + ATP + H(+) = deamido-NAD(+) + diphosphate. It functions in the pathway cofactor biosynthesis; NAD(+) biosynthesis; deamido-NAD(+) from nicotinate D-ribonucleotide: step 1/1. Functionally, catalyzes the reversible adenylation of nicotinate mononucleotide (NaMN) to nicotinic acid adenine dinucleotide (NaAD). The polypeptide is Probable nicotinate-nucleotide adenylyltransferase (Nitratiruptor sp. (strain SB155-2)).